The primary structure comprises 244 residues: CTD nuclear envelope phosphatase 1 (244 aa).

A helical membrane pass occupies residues 7–29 (LLGLRTFVAFAAKLWSFFIYLLR). An FCP1 homology domain is found at 57-224 (AQVKRKILVL…LNLLPMLDAL (168 aa)).

This sequence belongs to the dullard family. As to quaternary structure, (Microbial infection) Interacts with Chandipura virus matrix protein. In terms of assembly, interacts with CNEP1R1; the complex dephosphorylates LPIN1 and LPIN2. As to expression, muscle specific with lower expression in other metabolic tissues.

The protein localises to the endoplasmic reticulum membrane. Its subcellular location is the nucleus membrane. The catalysed reaction is O-phospho-L-seryl-[protein] + H2O = L-seryl-[protein] + phosphate. It carries out the reaction O-phospho-L-threonyl-[protein] + H2O = L-threonyl-[protein] + phosphate. Serine/threonine protein phosphatase forming with CNEP1R1 an active phosphatase complex that dephosphorylates and may activate LPIN1 and LPIN2. LPIN1 and LPIN2 are phosphatidate phosphatases that catalyze the conversion of phosphatidic acid to diacylglycerol and control the metabolism of fatty acids at different levels. May indirectly modulate the lipid composition of nuclear and/or endoplasmic reticulum membranes and be required for proper nuclear membrane morphology and/or dynamics. May also indirectly regulate the production of lipid droplets and triacylglycerol. May antagonize BMP signaling. The sequence is that of CTD nuclear envelope phosphatase 1 (CTDNEP1) from Homo sapiens (Human).